The chain runs to 146 residues: Large ribosomal subunit protein uL15 (146 aa).

Residues 1 to 54 are disordered; it reads MTLRLNELAPAEGAKRDNRRLGRGIGSGVGKTGGRGVKGQKSRKSGGVRPGFEG. Residues 23 to 37 show a composition bias toward gly residues; that stretch reads RGIGSGVGKTGGRGV.

Belongs to the universal ribosomal protein uL15 family. In terms of assembly, part of the 50S ribosomal subunit.

Functionally, binds to the 23S rRNA. The protein is Large ribosomal subunit protein uL15 of Acinetobacter baylyi (strain ATCC 33305 / BD413 / ADP1).